Consider the following 685-residue polypeptide: Hemocyanin subunit X (685 aa).

The N-terminal stretch at 1–20 is a signal peptide; sequence MKYCTESLILILAVIGCISA. Cu cation is bound by residues H210, H214, and H243. Residue N329 is glycosylated (N-linked (GlcNAc...) asparagine). Cu cation-binding residues include H367, H371, and H407. The cysteines at positions 577 and 625 are disulfide-linked.

This sequence belongs to the tyrosinase family. Hemocyanin subfamily.

The protein resides in the secreted. It is found in the extracellular space. Its function is as follows. Hemocyanins are copper-containing oxygen carriers occurring freely dissolved in the hemolymph of many mollusks and arthropods. This chain is Hemocyanin subunit X (HCX), found in Scutigera coleoptrata (House centipede).